A 137-amino-acid polypeptide reads, in one-letter code: Phosphoribosyl-AMP cyclohydrolase (137 aa).

Asp-84 serves as a coordination point for Mg(2+). Cys-85 provides a ligand contact to Zn(2+). Residues Asp-86 and Asp-88 each contribute to the Mg(2+) site. Positions 101 and 108 each coordinate Zn(2+).

It belongs to the PRA-CH family. Homodimer. The cofactor is Mg(2+). It depends on Zn(2+) as a cofactor.

The protein resides in the cytoplasm. The enzyme catalyses 1-(5-phospho-beta-D-ribosyl)-5'-AMP + H2O = 1-(5-phospho-beta-D-ribosyl)-5-[(5-phospho-beta-D-ribosylamino)methylideneamino]imidazole-4-carboxamide. Its pathway is amino-acid biosynthesis; L-histidine biosynthesis; L-histidine from 5-phospho-alpha-D-ribose 1-diphosphate: step 3/9. In terms of biological role, catalyzes the hydrolysis of the adenine ring of phosphoribosyl-AMP. This Chlorobaculum tepidum (strain ATCC 49652 / DSM 12025 / NBRC 103806 / TLS) (Chlorobium tepidum) protein is Phosphoribosyl-AMP cyclohydrolase.